Here is a 465-residue protein sequence, read N- to C-terminus: Auxin transporter-like protein 3 (465 aa).

Residues 1–52 are Cytoplasmic-facing; it reads MTSEKVETVVAGNYLEMEREEEGSKSTTGKLSKFFWHGGSVYDAWFSCASNQ. Residues 53–70 traverse the membrane as a helical segment; it reads VAQVLLTLPYSFSQLGML. Residues 71-72 lie on the Extracellular side of the membrane; it reads SG. A helical transmembrane segment spans residues 73 to 93; the sequence is ILFQIFYGLMGSWTAYIISVL. The Cytoplasmic portion of the chain corresponds to 94–129; it reads YVEYRTRKEREKVDFRNHVIQWFEVLDGLLGKHWRN. Residues 130–150 traverse the membrane as a helical segment; sequence LGLFFNCTFLLFGSVIQLIAC. Over 151-165 the chain is Extracellular; the sequence is ASNIYYINDHLDKRT. The helical transmembrane segment at 166–186 threads the bilayer; sequence WTYIFGACCATTVFIPSFHNY. Residues 187 to 189 lie on the Cytoplasmic side of the membrane; the sequence is RIW. A helical membrane pass occupies residues 190 to 210; sequence SFLGLVMTTYTAWYMTIASIL. The Extracellular segment spans residues 211–225; that stretch reads HGQAEDVKHSGPTKL. A helical membrane pass occupies residues 226–246; the sequence is VLYFTGATNILYTFGGHAVTV. The Cytoplasmic portion of the chain corresponds to 247 to 259; that stretch reads EIMHAMWKPQKFK. A helical membrane pass occupies residues 260–280; the sequence is MIYLIATLYVMTLTLPSAAAV. Residues 281-307 are Extracellular-facing; it reads YWAFGDNLLTHSNALSLLPRTGFRDTA. Residues 308 to 328 form a helical membrane-spanning segment; it reads VILMLIHQFITFGFACTPLYF. At 329 to 349 the chain is on the cytoplasmic side; sequence VWEKFLGVHETKSLLKRALVR. A helical transmembrane segment spans residues 350-370; the sequence is LPVVIPIWFLAIIFPFFGPIN. The Extracellular portion of the chain corresponds to 371–374; that stretch reads STVG. A helical transmembrane segment spans residues 375–395; sequence SLLVSFTVYIIPALAHMVTFA. Topologically, residues 396–421 are cytoplasmic; sequence SAPARENAVERPPSFLGGWVGLYSVN. Residues 422-442 traverse the membrane as a helical segment; sequence VFVAVWVLVVGFGLGGWASML. Residues 443–465 lie on the Extracellular side of the membrane; that stretch reads NFVHQIKTFGLFAKCFQCPPHKA.

The protein belongs to the amino acid/polyamine transporter 2 family. Amino acid/auxin permease (AAAP) (TC 2.A.18.1) subfamily. As to expression, shoots and roots of nodulating plants. Low levels in roots, nodules, stems, petioles, leaves, shoot apices and flowers.

Its subcellular location is the cell membrane. Carrier protein involved in proton-driven auxin influx. Mediates the formation of auxin gradient from developing leaves (site of auxin biosynthesis) to tips by contributing to the loading of auxin in vascular tissues and facilitating acropetal (base to tip) auxin transport within inner tissues of the root apex, and basipetal (tip to base) auxin transport within outer tissues of the root apex. May be involved in lateral roots and nodules formation. The protein is Auxin transporter-like protein 3 (LAX3) of Medicago truncatula (Barrel medic).